The following is a 47-amino-acid chain: Large ribosomal subunit protein bL34 (47 aa).

Residues 1 to 47 form a disordered region; it reads MVTEGLKPHISIKKKKRKSGFLARMRTKSGRKIIARRRRKGRKRLAP. Residues 10 to 47 are compositionally biased toward basic residues; sequence ISIKKKKRKSGFLARMRTKSGRKIIARRRRKGRKRLAP.

The protein belongs to the bacterial ribosomal protein bL34 family.

The polypeptide is Large ribosomal subunit protein bL34 (rpmH) (Aquifex aeolicus (strain VF5)).